Reading from the N-terminus, the 391-residue chain is G-patch domain-containing protein 1 (391 aa).

Residues 15–61 enclose the G-patch domain; sequence KDSAAFKLMKSMGWEEGEGLGKDKQGIKGYVRVTNKQDTSGVGLDKP. 2 disordered regions span residues 80-132 and 212-307; these read VQAA…EKGK and KASE…PAKR. 2 stretches are compositionally biased toward acidic residues: residues 92 to 102 and 265 to 295; these read DDSDKEDESED and NSDD…DDDK. A Nuclear localization signal motif is present at residues 305-312; the sequence is AKRKHDEI.

As to expression, strongly expressed in tissues with high cell proliferation activity that have a high demand for ribosome production such as shoot tips, leaves primordia, root tips and floral buds.

It localises to the nucleus. The protein localises to the nucleolus. Its function is as follows. Involved in ribosome biogenesis, required for normal progression of rRNA processing. Seems to promote cell proliferation in leaves. In Arabidopsis thaliana (Mouse-ear cress), this protein is G-patch domain-containing protein 1.